The chain runs to 471 residues: Probable multidrug-efflux transporter MT1670 (471 aa).

The next 14 membrane-spanning stretches (helical) occupy residues 23 to 43, 55 to 75, 91 to 111, 116 to 136, 146 to 166, 174 to 194, 213 to 233, 237 to 257, 279 to 299, 308 to 328, 337 to 357, 366 to 386, 410 to 430, and 438 to 458; these read IVLAGGVALYATNEFLTISLL, LYAWVTTLYLVGSVVAATTVN, LAVFGLASLVCAAAPSMQILV, LQGIAGGLLAGLGYALINSTL, ALVSAMWGVATLIGPATGGLF, WAFGVMTLLTALMAMLVPVAL, VPVWSLLLMGAAALAISVAAL, LVQTAGLLAAAALLVAVFVVV, IYLTMSVQMIAAMVDTYVPLF, PVAAGFLGAALAVGWTVGEVA, VIGHVVAAAPLVMASGLALGA, VGIIALWALALLIIGTGIGIA, AINVVQLISGAFGAGLAGVVV, and VAAARGLYMAFTVLAAAGVIA.

This sequence belongs to the major facilitator superfamily.

Its subcellular location is the cell membrane. Functionally, could be involved in fluoroquinolones efflux. The polypeptide is Probable multidrug-efflux transporter MT1670 (Mycobacterium tuberculosis (strain CDC 1551 / Oshkosh)).